The sequence spans 233 residues: Antiholin-like protein LrgB (233 aa).

7 consecutive transmembrane segments (helical) span residues 9 to 29 (TPYF…ILFE), 34 to 54 (FFLF…LYLT), 63 to 83 (IGGD…AIPL), 97 to 117 (IIGG…TFAK), 121 to 141 (FAND…IALP), 144 to 164 (AGIG…GVII), and 212 to 232 (IALV…VAIF).

It belongs to the CidB/LrgB family. LrgB subfamily.

Its subcellular location is the cell membrane. Inhibits the expression or activity of extracellular murein hydrolases by interacting, possibly with LrgA, with the holin-like proteins CidA and/or CidB. The LrgAB and CidAB proteins may affect the proton motive force of the membrane. May be involved in programmed cell death (PCD), possibly triggering PCD in response to antibiotics and environmental stresses. The chain is Antiholin-like protein LrgB from Staphylococcus aureus (strain Mu3 / ATCC 700698).